We begin with the raw amino-acid sequence, 195 residues long: MNTILTKLKDFVGISEHDDEYETDYEEMEYDRYSKTNSSETLAPEEEEPIRNRRTRESLNLTSDVPMGTTTRNNVIGMPGITNGIAEVVVIEPHSFEEMPQVIQTLRERKSVVLNLNVMDPEEAQRAVDFVAGGTYAIDGHQERIGESIFLFTPSCVKVSTLTGTVHDVPETPKATTRPTMSTPVWGAEASRIAQ.

Residues R32 to R54 are disordered.

Belongs to the SepF family. Homodimer. Interacts with FtsZ.

The protein localises to the cytoplasm. Its function is as follows. Cell division protein that is part of the divisome complex and is recruited early to the Z-ring. Probably stimulates Z-ring formation, perhaps through the cross-linking of FtsZ protofilaments. Its function overlaps with FtsA. This Gloeothece citriformis (strain PCC 7424) (Cyanothece sp. (strain PCC 7424)) protein is Cell division protein SepF.